Consider the following 763-residue polypeptide: Cyclin-F (763 aa).

The Nuclear localization signal 1 signature appears at Lys19–Arg27. Residues Val28–Ala75 form the F-box domain. A Cyclin N-terminal domain is found at Ile299–Ile411. 2 short sequence motifs (d box) span residues Arg316 to Leu319 and Arg355 to Leu358. Disordered stretches follow at residues Gly574–Leu600 and Lys677–Leu763. The short motif at Ser575 to Arg581 is the Nuclear localization signal 2 element. A compositionally biased stretch (basic and acidic residues) spans Arg580–Gly590. Residues Arg589 to Lys747 are PEST. A compositionally biased stretch (low complexity) spans Ser692–Pro710. Residues Ala741–Gln751 are compositionally biased toward basic residues.

The protein belongs to the cyclin family. Cyclin AB subfamily. Component of the SCF(CCNF) complex.

The protein localises to the nucleus. Its subcellular location is the cytoplasm. The protein resides in the perinuclear region. It localises to the cytoskeleton. It is found in the microtubule organizing center. The protein localises to the centrosome. Its subcellular location is the centriole. Its function is as follows. Substrate recognition component of the SCF(CCNF) E3 ubiquitin-protein ligase complex which mediates the ubiquitination and subsequent proteasomal degradation of target proteins. The SCF(CCNF) E3 ubiquitin-protein ligase complex is an integral component of the ubiquitin proteasome system (UPS) and links proteasome degradation to the cell cycle. Mediates the substrate recognition and the proteasomal degradation of various target proteins during G2 phase involved in the regulation of cell cycle progression and in the maintenance of genome stability. The sequence is that of Cyclin-F (ccnf) from Xenopus tropicalis (Western clawed frog).